A 405-amino-acid chain; its full sequence is Metallophosphoesterase 1 (405 aa).

The chain crosses the membrane as a helical span at residues 31 to 51 (IFGSILLVFFFCEFLVYYLVI). A divalent metal cation is bound by residues D78, D120, N158, H261, H315, and H317. A helical membrane pass occupies residues 369 to 389 (IIYIYCTASVLLTGYVLACLW).

This sequence belongs to the metallophosphoesterase superfamily. MPPE1 family. Requires Mn(2+) as cofactor.

The protein resides in the endoplasmic reticulum-Golgi intermediate compartment membrane. Metallophosphoesterase that catalyzes the removal of a side-chain ethanolamine-phosphate (EtNP) from the second mannose of the GPI-anchor protein intermediate. Participates in the glycan remodeling steps of GPI-anchor maturation to allow an efficient transport of GPI-anchor proteins from the endoplasmic reticulum to the Golgi. In Xenopus laevis (African clawed frog), this protein is Metallophosphoesterase 1.